We begin with the raw amino-acid sequence, 416 residues long: Glutamyl-tRNA reductase (416 aa).

Substrate-binding positions include 49-52 (TCNR), S105, 110-112 (EPQ), and Q116. C50 serves as the catalytic Nucleophile. Position 185–190 (185–190 (GAGETI)) interacts with NADP(+).

Belongs to the glutamyl-tRNA reductase family. Homodimer.

The enzyme catalyses (S)-4-amino-5-oxopentanoate + tRNA(Glu) + NADP(+) = L-glutamyl-tRNA(Glu) + NADPH + H(+). It functions in the pathway porphyrin-containing compound metabolism; protoporphyrin-IX biosynthesis; 5-aminolevulinate from L-glutamyl-tRNA(Glu): step 1/2. Catalyzes the NADPH-dependent reduction of glutamyl-tRNA(Glu) to glutamate 1-semialdehyde (GSA). The polypeptide is Glutamyl-tRNA reductase (Shewanella loihica (strain ATCC BAA-1088 / PV-4)).